Consider the following 344-residue polypeptide: NADH-ubiquinone oxidoreductase chain 1 (344 aa).

A run of 10 helical transmembrane segments spans residues 18-38 (FIIILLFIKSLSYIIPLIIAI), 58-78 (PNIVGIFGLLQPIADGLKLLL), 89-109 (IFIFIIAPILTFFLALCAWAI), 123-143 (IGILYLLAISSLGVYGIIISG), 159-179 (AAQIISYEVSIGLIIINVLLC), 195-215 (IWYIFPLFPLFLMFFISSLAE), 228-248 (AELVAGYNVEYSAMGFALFFL), 253-273 (NIILISAVSTILFLAGWLPPF), 281-301 (IPNSIWFGFKTIIILVLFIWV), and 316-336 (LGWKIFLPLSLAWLMLTSGIL).

This sequence belongs to the complex I subunit 1 family.

It is found in the mitochondrion inner membrane. The catalysed reaction is a ubiquinone + NADH + 5 H(+)(in) = a ubiquinol + NAD(+) + 4 H(+)(out). Functionally, core subunit of the mitochondrial membrane respiratory chain NADH dehydrogenase (Complex I) that is believed to belong to the minimal assembly required for catalysis. Complex I functions in the transfer of electrons from NADH to the respiratory chain. The immediate electron acceptor for the enzyme is believed to be ubiquinone. This chain is NADH-ubiquinone oxidoreductase chain 1 (ND1), found in Cyanidium caldarium (Red alga).